A 348-amino-acid chain; its full sequence is Dihydroorotase (348 aa).

Zn(2+) is bound by residues histidine 17 and histidine 19. Residues histidine 19–arginine 21 and asparagine 45 contribute to the substrate site. Residues lysine 103, histidine 140, and histidine 178 each coordinate Zn(2+). N6-carboxylysine is present on lysine 103. Histidine 140 contributes to the substrate binding site. A substrate-binding site is contributed by leucine 223. Aspartate 251 provides a ligand contact to Zn(2+). Aspartate 251 is a catalytic residue. Substrate contacts are provided by histidine 255 and alanine 267.

This sequence belongs to the metallo-dependent hydrolases superfamily. DHOase family. Class II DHOase subfamily. As to quaternary structure, homodimer. Zn(2+) serves as cofactor.

The catalysed reaction is (S)-dihydroorotate + H2O = N-carbamoyl-L-aspartate + H(+). The protein operates within pyrimidine metabolism; UMP biosynthesis via de novo pathway; (S)-dihydroorotate from bicarbonate: step 3/3. Functionally, catalyzes the reversible cyclization of carbamoyl aspartate to dihydroorotate. The protein is Dihydroorotase of Escherichia coli O17:K52:H18 (strain UMN026 / ExPEC).